Here is a 706-residue protein sequence, read N- to C-terminus: Paxillin-like protein 1 (706 aa).

Disordered regions lie at residues 24-192 (ERAG…EQDL), 222-258 (VLDQ…LNFE), 279-341 (AKQE…TKVE), and 514-537 (IDNS…SSDA). The segment covering 35–64 (PFSSQRNASTGSLQASVKSPPITRQRNVSA) has biased composition (polar residues). A phosphoserine mark is found at Ser-43 and Ser-63. Low complexity-rich tracts occupy residues 73 to 86 (KSAY…AYSS) and 117 to 129 (SSRP…SISR). 2 stretches are compositionally biased toward basic and acidic residues: residues 130–150 (PSER…DRQA) and 222–236 (VLDQ…KEES). The span at 237–252 (SIEYESEGQQEDENDI) shows a compositional bias: acidic residues. The segment covering 279 to 290 (AKQEEKNTEPKI) has biased composition (basic and acidic residues). Residues 296–308 (TRESNTPSLTMNA) show a composition bias toward polar residues. LIM zinc-binding domains follow at residues 556–612 (CRAC…CQKH) and 621–672 (CKVC…CGNH).

The protein is Paxillin-like protein 1 (PXL1) of Saccharomyces cerevisiae (strain ATCC 204508 / S288c) (Baker's yeast).